A 590-amino-acid polypeptide reads, in one-letter code: Arginine--tRNA ligase (590 aa).

Positions 132–142 (PNTNKPLHLGH) match the 'HIGH' region motif.

Belongs to the class-I aminoacyl-tRNA synthetase family. Monomer.

Its subcellular location is the cytoplasm. The enzyme catalyses tRNA(Arg) + L-arginine + ATP = L-arginyl-tRNA(Arg) + AMP + diphosphate. This is Arginine--tRNA ligase from Treponema denticola (strain ATCC 35405 / DSM 14222 / CIP 103919 / JCM 8153 / KCTC 15104).